A 127-amino-acid polypeptide reads, in one-letter code: Holo-[acyl-carrier-protein] synthase (127 aa).

Mg(2+) contacts are provided by Asp-9 and Glu-58.

It belongs to the P-Pant transferase superfamily. AcpS family. The cofactor is Mg(2+).

It localises to the cytoplasm. The enzyme catalyses apo-[ACP] + CoA = holo-[ACP] + adenosine 3',5'-bisphosphate + H(+). Functionally, transfers the 4'-phosphopantetheine moiety from coenzyme A to a Ser of acyl-carrier-protein. The sequence is that of Holo-[acyl-carrier-protein] synthase from Shewanella baltica (strain OS185).